The sequence spans 237 residues: MRPNDRTPAQSRPVTITRQFTAHAEGSVLVEFGETKVLCTASFTEGVPRFLKGKGQGWVTAEYGMLPRSTHSRMDREAARGKQSGRTQEIQRLIGRSLRAAVDMKALGENTIVIDCDVIQADGGTRTAAITGACVALVDALNWARGKGILKNNPLKFLIAAVSVGIYKGEPICDLEYIEDSEAETDMNVVMTETGKMIEIQGTAEGEPFSHEELLSLLELAKHGIREIVDVQKAALS.

Residues Arg-86 and 124-126 (GTR) contribute to the phosphate site.

This sequence belongs to the RNase PH family. In terms of assembly, homohexameric ring arranged as a trimer of dimers.

It carries out the reaction tRNA(n+1) + phosphate = tRNA(n) + a ribonucleoside 5'-diphosphate. Its function is as follows. Phosphorolytic 3'-5' exoribonuclease that plays an important role in tRNA 3'-end maturation. Removes nucleotide residues following the 3'-CCA terminus of tRNAs; can also add nucleotides to the ends of RNA molecules by using nucleoside diphosphates as substrates, but this may not be physiologically important. Probably plays a role in initiation of 16S rRNA degradation (leading to ribosome degradation) during starvation. The protein is Ribonuclease PH of Shewanella woodyi (strain ATCC 51908 / MS32).